The sequence spans 89 residues: Phasin PhaP (89 aa).

2 helix regions span residues 3–26 (TQFF…TWME) and 39–83 (DTFE…ALRQ).

Homotetramer.

The protein localises to the cellular thylakoid membrane. It localises to the cytoplasm. It participates in biopolymer metabolism; poly-(R)-3-hydroxybutanoate biosynthesis. A phasin, it attaches to the polyhydroxybutyrate (PHB) granule surface regulating the number and size of PHB granules within a cell. It probably also acts as a regulator affecting the biosynthetic activity of PHB synthase in vivo. In Synechocystis sp. (strain ATCC 27184 / PCC 6803 / Kazusa), this protein is Phasin PhaP.